Reading from the N-terminus, the 511-residue chain is Adenosine deaminase 2 (511 aa).

An N-terminal signal peptide occupies residues 1 to 29 (MLVDGPSERPALCFLLLAVAMSFFGSALS). Positions 30–100 (IDETRAHLLL…HLIERSQVFN (71 aa)) are dimerization. Zn(2+) contacts are provided by histidine 112 and histidine 114. Aspartate 115 is a substrate binding site. An N-linked (GlcNAc...) asparagine glycan is attached at asparagine 127. The tract at residues 127–185 (NVTYRPHCHICFTPRGIMQFRFAHPTPRPSEKCSKWILLEDYRKRVQNVTEFDDSLLRN) is PRB domain. Cysteine 137 and cysteine 159 are disulfide-bonded. N-linked (GlcNAc...) asparagine glycans are attached at residues asparagine 174 and asparagine 185. Substrate contacts are provided by residues 204 to 211 (WSKFETIF), histidine 293, and glycine 326. Residue histidine 356 coordinates Zn(2+). The active-site Proton donor is glutamate 359. An N-linked (GlcNAc...) asparagine glycan is attached at asparagine 378. Histidine 384 acts as the Proton acceptor in catalysis. Residue aspartate 441 participates in Zn(2+) binding. Position 442 (aspartate 442) interacts with substrate.

It belongs to the metallo-dependent hydrolases superfamily. Adenosine and AMP deaminases family. ADGF subfamily. Homodimer. Interacts with adenosine receptors. Binds heparin. It depends on Zn(2+) as a cofactor. As to expression, detected in blood plasma (at protein level). Widely expressed, with most abundant expression in human adult heart, lung, lymphoblasts, and placenta as well as fetal lung, liver, and kidney. In embryo, expressed in the outflow tract and atrium of the developing heart, the VII/VIII cranial nerve ganglion, and the notochord.

It localises to the secreted. The enzyme catalyses adenosine + H2O + H(+) = inosine + NH4(+). Its function is as follows. Adenosine deaminase that may contribute to the degradation of extracellular adenosine, a signaling molecule that controls a variety of cellular responses. Requires elevated adenosine levels for optimal enzyme activity. Binds to cell surfaces via proteoglycans and may play a role in the regulation of cell proliferation and differentiation, independently of its enzyme activity. The protein is Adenosine deaminase 2 of Homo sapiens (Human).